We begin with the raw amino-acid sequence, 301 residues long: Homoserine O-acetyltransferase (301 aa).

The active-site Acyl-thioester intermediate is the Cys-142. Residues Lys-163 and Ser-192 each coordinate substrate. The active-site Proton acceptor is the His-235. Glu-237 is a catalytic residue. Residue Arg-249 coordinates substrate.

The protein belongs to the MetA family.

The protein localises to the cytoplasm. The enzyme catalyses L-homoserine + acetyl-CoA = O-acetyl-L-homoserine + CoA. It functions in the pathway amino-acid biosynthesis; L-methionine biosynthesis via de novo pathway; O-acetyl-L-homoserine from L-homoserine: step 1/1. In terms of biological role, transfers an acetyl group from acetyl-CoA to L-homoserine, forming acetyl-L-homoserine. The chain is Homoserine O-acetyltransferase from Novosphingobium aromaticivorans (strain ATCC 700278 / DSM 12444 / CCUG 56034 / CIP 105152 / NBRC 16084 / F199).